Reading from the N-terminus, the 240-residue chain is UDP-2,3-diacylglucosamine hydrolase (240 aa).

5 residues coordinate Mn(2+): Asp8, His10, Asp41, Asn79, and His114. 79-80 (NR) is a binding site for substrate. Asp122, Ser160, Thr164, Lys167, and His195 together coordinate substrate. Mn(2+) is bound by residues His195 and His197.

Belongs to the LpxH family. Mn(2+) is required as a cofactor.

The protein localises to the cell inner membrane. The enzyme catalyses UDP-2-N,3-O-bis[(3R)-3-hydroxytetradecanoyl]-alpha-D-glucosamine + H2O = 2-N,3-O-bis[(3R)-3-hydroxytetradecanoyl]-alpha-D-glucosaminyl 1-phosphate + UMP + 2 H(+). It functions in the pathway glycolipid biosynthesis; lipid IV(A) biosynthesis; lipid IV(A) from (3R)-3-hydroxytetradecanoyl-[acyl-carrier-protein] and UDP-N-acetyl-alpha-D-glucosamine: step 4/6. Its function is as follows. Hydrolyzes the pyrophosphate bond of UDP-2,3-diacylglucosamine to yield 2,3-diacylglucosamine 1-phosphate (lipid X) and UMP by catalyzing the attack of water at the alpha-P atom. Involved in the biosynthesis of lipid A, a phosphorylated glycolipid that anchors the lipopolysaccharide to the outer membrane of the cell. This chain is UDP-2,3-diacylglucosamine hydrolase, found in Pseudomonas paraeruginosa (strain DSM 24068 / PA7) (Pseudomonas aeruginosa (strain PA7)).